Reading from the N-terminus, the 152-residue chain is Homeobox protein ceh-63 (152 aa).

The span at 21-30 (NDTNSSQQIK) shows a compositional bias: polar residues. Disordered regions lie at residues 21 to 48 (NDTN…RTTF) and 92 to 126 (RRTK…SQHV). Basic residues predominate over residues 35–44 (PPKRSNRPTK). A DNA-binding region (homeobox) is located at residues 41–100 (RPTKRTTFTSEQVTLLELEFAKNEYICKDRRGELAQTIELTECQVKTWFQNRRTKKRRCT). Residues 116–126 (PSPQNPSSQHV) are compositionally biased toward polar residues.

In terms of assembly, may interact with homeobox protein ceh-14.

Its subcellular location is the nucleus. Probable transcription factor, modulating expression of helix-loop-helix protein mbr-1, perhaps acting in concert with homeobox protein ceh-14. May play a minor role in axon guidance in the DVC interneuron. This chain is Homeobox protein ceh-63, found in Caenorhabditis elegans.